We begin with the raw amino-acid sequence, 1148 residues long: Small G protein signaling modulator 1 (1148 aa).

An RUN domain is found at 36–190; it reads HEDSSHIISF…EYTKMKTADH (155 aa). The tract at residues 256 to 297 is important for interaction with RAB9A and RAB9B; that stretch reads LLYGKNNVLVQPRDDMEAVPGYLSLHQTADVMTLKWTPNQLM. The required for interaction with RAP family members stretch occupies residues 301–350; the sequence is VGDLDYEKSVYWDYAMTIRLEEIVYLHCHQQVDSGGTVVLVSQDGIQRPP. Disordered regions lie at residues 377-411, 700-830, and 871-894; these read DPPL…DKDD, DSTI…PREE, and GWRS…EEPE. Residues 385–397 are compositionally biased toward basic residues; that stretch reads GKGKVFPKLRKRS. Residues 617 to 1081 enclose the Rab-GAP TBC domain; it reads GIQPEIRKAV…LVWETIWAAK (465 aa). Residues 702–716 show a composition bias toward polar residues; sequence TISNESSQSCSSGRQ. A compositionally biased stretch (basic and acidic residues) spans 742-751; the sequence is AEGRLEEKQP. Residues 757-802 show a composition bias toward polar residues; it reads NLVNGTCSPDSGHPSSHNFSSGLSEHSEPSLSTEDSVLDAQRNTPT. 2 stretches are compositionally biased toward basic and acidic residues: residues 805–816 and 871–883; these read RPRDGSVDDRQS and GWRS…HGQA. Over residues 884–894 the composition is skewed to acidic residues; it reads DSEDNLSEEPE.

Belongs to the RUTBC family. Interacts with RAB9A (GTP-bound form) and RAB9B (GTP-bound form); has much lower affinity for GDP-bound RAB9A and RAB9B. Interacts with RAB3A, RAB4A, RAB5A, RAB8A, RAB11A, RAP1A, RAP1B, RAP2A and RAP2B. No interaction with RAB27A. In terms of tissue distribution, mainly expressed in brain, heart and testis.

It is found in the golgi apparatus. It localises to the trans-Golgi network. Its subcellular location is the cytoplasmic vesicle membrane. The protein resides in the cytoplasm. Interacts with numerous Rab family members, functioning as Rab effector for some, and as GTPase activator for others. Promotes GTP hydrolysis by RAB34 and RAB36. Probably functions as a GTPase effector with RAB9A and RAB9B; does not stimulate GTP hydrolysis with RAB9A and RAB9B. The chain is Small G protein signaling modulator 1 (SGSM1) from Homo sapiens (Human).